The following is a 212-amino-acid chain: MFAEFGVLNYLTYLVGAVFIILVPGPNTFFVLKTGIAHGVKKGYLAAAGVFIGDAVLMFLAFAGVATLIKTTPVLFNVVRYLGAIYLLWLGGKMLYAVLTQRDGQSDASAEPASAILKRSLTLSLTNPKAILFYVSFFVQFIDVNAKTPGVAFFILALTLEVISFCYMSFLILSGSFVTRYVKTRKKLAKLGNSLIGLVFVGFAARLATLQS.

The next 6 helical transmembrane spans lie at 5 to 25 (FGVL…LVPG), 49 to 69 (GVFI…ATLI), 81 to 101 (YLGA…VLTQ), 122 to 142 (TLSL…VQFI), 153 to 173 (FFIL…FLIL), and 188 to 208 (LAKL…ARLA).

It belongs to the Rht family.

The protein localises to the cell inner membrane. The enzyme catalyses L-leucine(in) + H(+)(out) = L-leucine(out) + H(+)(in). Exporter of leucine. The protein is Leucine efflux protein (leuE) of Klebsiella pneumoniae subsp. pneumoniae (strain ATCC 700721 / MGH 78578).